Here is a 191-residue protein sequence, read N- to C-terminus: Transposon Tn1546 resolvase (191 aa).

Residues 2-138 (RKIGYIRVSS…EGIELAKKEG (137 aa)) form the Resolvase/invertase-type recombinase catalytic domain. Ser-10 serves as the catalytic O-(5'-phospho-DNA)-serine intermediate. A DNA-binding region (H-T-H motif) is located at residues 168–187 (VNQICEITNVSRASLYRKLS).

Belongs to the site-specific recombinase resolvase family.

Resolvase catalyzes the resolution (a site-specific recombination) of the cointegrated replicon to yield the final transposition products. This chain is Transposon Tn1546 resolvase, found in Enterococcus faecium (Streptococcus faecium).